Here is a 281-residue protein sequence, read N- to C-terminus: Survival motor neuron protein 1 (281 aa).

Disordered regions lie at residues 1–20 (MANG…SDDS) and 42–77 (ALKG…NAAP). Threonine 14 is modified (phosphothreonine). Serine 17 and serine 20 each carry phosphoserine. The segment covering 59 to 73 (KKRKNNKKNKSRKRC) has biased composition (basic residues). Residues 80–140 (EWQVGDSCYA…LTEPPDMDED (61 aa)) enclose the Tudor domain. Residues 145–159 (ANVKETESSTEESDR) are compositionally biased toward basic and acidic residues. The disordered stretch occupies residues 145-242 (ANVKETESST…PMSPDFGEDD (98 aa)). Composition is skewed to pro residues over residues 179 to 197 (MGPP…PPPP) and 212 to 235 (PSFP…PPMS). The tract at residues 225–252 (PPMIPPPPPMSPDFGEDDEALGSMLISW) is P2 (binding site for SNRPB). Residues 264–279 (GLRQGRKEAAASKKSH) are required for interaction with SYNCRIP.

This sequence belongs to the SMN family. In terms of assembly, homodimer. Component of an import snRNP complex composed of kpnb1, rnut1, smn1 and znf259. Part of the core SMN complex that contains smn1, gemin2/sip1, ddx20/gemin3, gemin4, gemin5, gemin6, gemin7, gemin8 and strap/unrip. Interacts with ddx20, fbl, nola1, rnut1, syncrip and with several spliceosomal snRNP core Sm proteins, including snrpb, snrpd1, snrpd2, snrpd3, snrpe and ilf3. Interacts with elavl4.

It is found in the nucleus. The protein localises to the gem. It localises to the cajal body. Its subcellular location is the cytoplasm. The protein resides in the cytoplasmic granule. It is found in the perikaryon. The protein localises to the cell projection. It localises to the neuron projection. Its subcellular location is the myofibril. The protein resides in the sarcomere. It is found in the z line. Its function is as follows. The SMN complex plays an essential role in spliceosomal snRNP assembly in the cytoplasm and is required for pre-mRNA splicing in the nucleus. It may also play a role in the metabolism of snoRNPs. Required in motor neurons and proprioceptive neurons to ensure correct U12 intron splicing and proper levels of tmem41b mRNA. Required for the maturation of motor neuron axonal branches and dendrites. This chain is Survival motor neuron protein 1 (smn1), found in Danio rerio (Zebrafish).